The primary structure comprises 546 residues: Phosphatidylinositol 4-phosphate 5-kinase type-1 alpha (546 aa).

Residues 66-434 (TSSALKGAIQ…RFQRFMCNTV (369 aa)) form the PIPK domain. A Glycyl lysine isopeptide (Lys-Gly) (interchain with G-Cter in ubiquitin) cross-link involves residue K88. Disordered stretches follow at residues 442–475 (PSPT…SGEH) and 491–518 (LGRP…PSFS). Low complexity-rich tracts occupy residues 450 to 462 (SGPS…GPSG) and 509 to 518 (GSPVPGPSFS).

Interacts with RAC1. Interacts with TUT1. Forms a complex with CDH1/E-cadherin, CTNNB1/beta-catenin and CTNND1 at the plasma membrane upon calcium stimulation. Found in a ternary complex with IRS1 and DGKZ in the absence of insulin stimulation. Interacts with DGKZ. Interacts with PIP4K2C; the interaction inhibits PIP5K1A kinase activity. As to expression, highest expression in brain. Also detected in skeletal muscle, testis, brain and lung.

The protein localises to the cell membrane. The protein resides in the cytoplasm. It is found in the nucleus. It localises to the nucleus speckle. Its subcellular location is the cell projection. The protein localises to the ruffle. The protein resides in the lamellipodium. It catalyses the reaction a 1,2-diacyl-sn-glycero-3-phospho-(1D-myo-inositol 4-phosphate) + ATP = a 1,2-diacyl-sn-glycero-3-phospho-(1D-myo-inositol-4,5-bisphosphate) + ADP + H(+). The enzyme catalyses 1-octadecanoyl-2-(5Z,8Z,11Z,14Z)-eicosatetraenoyl-sn-glycero-3-phospho-1D-myo-inositol 4-phosphate + ATP = 1-octadecanoyl-2-(5Z,8Z,11Z,14Z)-eicosatetraenoyl-sn-glycero-3-phospho-1D-myo-inositol 4,5-bisphosphate + ADP + H(+). It carries out the reaction 1,2-dihexadecanoyl-sn-glycero-3-phospho-(1D-myo-inositol-4-phosphate) + ATP = 1,2-dihexadecanoyl-sn-glycero-3-phospho-(1D-myo-inositol-4,5-bisphosphate) + ADP + H(+). The catalysed reaction is 1-octadecanoyl-2-(9Z)-octadecenoyl-sn-glycero-3-phospho-1D-myo-inositol 4-phosphate + ATP = 1-octadecanoyl-2-(9Z)-octadecenoyl-sn-glycero-3-phospho-1D-myo-inositol 4,5-bisphosphate + ADP + H(+). It catalyses the reaction 1-octadecanoyl-2-(9Z)-octadecenoyl-sn-glycero-3-phospho-1D-myo-inositol + ATP = 1-octadecanoyl-2-(9Z)-octadecenoyl-sn-glycero-3-phospho-1D-myo-inositol 5-phosphate + ADP + H(+). The enzyme catalyses 1-octadecanoyl-2-(9Z,12Z)-octadecadienoyl-sn-glycero-3-phospho-1D-myo-inositol + ATP = 1-octadecanoyl-2-(9Z,12Z)-octadecadienoyl-sn-glycero-3-phospho-1D-myo-inositol 5-phosphate + ADP + H(+). It carries out the reaction 1-octadecanoyl-2-(5Z,8Z,11Z,14Z-eicosatetraenoyl)-sn-glycero-3-phospho-(1D-myo-inositol) + ATP = 1-octadecanoyl-2-(5Z,8Z,11Z,14Z)-eicosatetraenoyl-sn-glycero-3-phospho-1D-myo-inositol 5-phosphate + ADP + H(+). The catalysed reaction is 1,2-di-(9Z,12Z)-octadecadienoyl-sn-glycero-3-phospho-1D-myo-inositol + ATP = 1,2-di(9Z,12Z)-octadecadienoyl-sn-glycero-3-phospho-1D-myo-inositol 5-phosphate + ADP + H(+). Its activity is regulated as follows. Activated by phosphatidic acid. Its function is as follows. Catalyzes the phosphorylation of phosphatidylinositol 4-phosphate (PtdIns(4)P/PI4P) to form phosphatidylinositol 4,5-bisphosphate (PtdIns(4,5)P2/PIP2), a lipid second messenger that regulates several cellular processes such as signal transduction, vesicle trafficking, actin cytoskeleton dynamics, cell adhesion, and cell motility. PtdIns(4,5)P2 can directly act as a second messenger or can be utilized as a precursor to generate other second messengers: inositol 1,4,5-trisphosphate (IP3), diacylglycerol (DAG) or phosphatidylinositol-3,4,5-trisphosphate (PtdIns(3,4,5)P3/PIP3). PIP5K1A-mediated phosphorylation of PtdIns(4)P is the predominant pathway for PtdIns(4,5)P2 synthesis. Can also use phosphatidylinositol (PtdIns) as substrate in vitro. Together with PIP5K1C, is required for phagocytosis, both enzymes regulating different types of actin remodeling at sequential steps. Promotes particle ingestion by activating the WAS GTPase-binding protein that induces Arp2/3 dependent actin polymerization at the nascent phagocytic cup. Together with PIP5K1B, is required, after stimulation by G-protein coupled receptors, for the synthesis of IP3 that will induce stable platelet adhesion. Recruited to the plasma membrane by the E-cadherin/beta-catenin complex where it provides the substrate PtdIns(4,5)P2 for the production of PtdIns(3,4,5)P3, IP3 and DAG, that will mobilize internal calcium and drive keratinocyte differentiation. Positively regulates insulin-induced translocation of SLC2A4 to the cell membrane in adipocytes. Together with PIP5K1C has a role during embryogenesis. Independently of its catalytic activity, is required for membrane ruffling formation, actin organization and focal adhesion formation during directional cell migration by controlling integrin-induced translocation of the small GTPase RAC1 to the plasma membrane. Also functions in the nucleus where it acts as an activator of TUT1 adenylyltransferase activity in nuclear speckles, thereby regulating mRNA polyadenylation of a select set of mRNAs. This is Phosphatidylinositol 4-phosphate 5-kinase type-1 alpha from Mus musculus (Mouse).